Consider the following 328-residue polypeptide: Dolichyl-diphosphooligosaccharide--protein glycosyltransferase subunit MAGT1 (328 aa).

The signal sequence occupies residues 1-22; that stretch reads MAALPVLVLVLLLACGGPRAAG. Topologically, residues 23 to 177 are extracellular; the sequence is QKRKEMVLSE…DVNIRVIRPP (155 aa). Residues 40–168 form the Thioredoxin domain; the sequence is WTSKRSVIRM…LARWVADRTD (129 aa). N-linked (GlcNAc...) asparagine glycosylation is present at asparagine 64. Cysteine 80 and cysteine 83 are oxidised to a cystine. A helical transmembrane segment spans residues 178–198; that stretch reads NYAGPLMLGLLLAVIGGLVYL. Over 199–211 the chain is Cytoplasmic; sequence RGSNLDFLYNKTG. Residues 212 to 232 form a helical membrane-spanning segment; that stretch reads WAFAALCFVLAMTSGQMWNHI. Residues 233–257 are Extracellular-facing; the sequence is RGPPYAHKNPHTGQVNYIHGSSQAQ. Residues 258–278 form a helical membrane-spanning segment; it reads FVAETHIVLLFNGGVTLGMVL. Over 279–293 the chain is Cytoplasmic; sequence LHEAATSDMDVGKRK. Residues 294–314 traverse the membrane as a helical segment; it reads IMCIAGIGLVVFFFSWLLSVF. Topologically, residues 315-328 are extracellular; that stretch reads RSKYHGYPYSFLMS.

The protein belongs to the OST3/OST6 family. In terms of assembly, accessory component of the STT3B-containing form of the oligosaccharyltransferase (OST) complex. OST exists in two different complex forms which contain common core subunits RPN1, RPN2, OST48, OST4, DAD1 and TMEM258, either STT3A or STT3B as catalytic subunits, and form-specific accessory subunits. OST can form stable complexes with the Sec61 complex or with both the Sec61 and TRAP complexes.

The protein resides in the cell membrane. Its subcellular location is the endoplasmic reticulum. The protein localises to the endoplasmic reticulum membrane. Its pathway is protein modification; protein glycosylation. Accessory component of the STT3B-containing form of the N-oligosaccharyl transferase (OST) complex which catalyzes the transfer of a high mannose oligosaccharide from a lipid-linked oligosaccharide donor to an asparagine residue within an Asn-X-Ser/Thr consensus motif in nascent polypeptide chains. Involved in N-glycosylation of STT3B-dependent substrates. Specifically required for the glycosylation of a subset of acceptor sites that are near cysteine residues; in this function seems to act redundantly with TUSC3. In its oxidized form proposed to form transient mixed disulfides with a glycoprotein substrate to facilitate access of STT3B to the unmodified acceptor site. Also has oxidoreductase-independent functions in the STT3B-containing OST complex possibly involving substrate recognition. Could indirectly play a role in Mg(2+) transport in epithelial cells. The protein is Dolichyl-diphosphooligosaccharide--protein glycosyltransferase subunit MAGT1 of Gallus gallus (Chicken).